The chain runs to 152 residues: Small ribosomal subunit protein uS13 (152 aa).

S2 carries the N-acetylserine modification. A Glycyl lysine isopeptide (Lys-Gly) (interchain with G-Cter in SUMO2) cross-link involves residue K91. An N6-acetyllysine; alternate mark is found at K94 and K106. Glycyl lysine isopeptide (Lys-Gly) (interchain with G-Cter in SUMO2); alternate cross-links involve residues K94 and K106.

It belongs to the universal ribosomal protein uS13 family. Component of the small ribosomal subunit.

The protein localises to the cytoplasm. Component of the small ribosomal subunit. The ribosome is a large ribonucleoprotein complex responsible for the synthesis of proteins in the cell. The protein is Small ribosomal subunit protein uS13 (RPS18) of Homo sapiens (Human).